The chain runs to 1187 residues: RNA helicase Mov10l1 (1187 aa).

The disordered stretch occupies residues Arg-273–Pro-347. Basic and acidic residues-rich tracts occupy residues His-296–Glu-307 and Ala-322–Pro-339. 5 tandem repeats follow at residues Thr-642–Ile-652, Ile-653–Val-663, Thr-664–Val-674, Thr-675–Ile-685, and Thr-686–Asn-696. The interval Thr-642–Asn-696 is 5 X 11 AA tandem repeats of [TI]-R-N-[DN]-[GS]-Q-[SP]-I-T-[NK]-[IVN]. A disordered region spans residues Thr-686 to Glu-727. Positions Thr-699 to Glu-720 are enriched in basic and acidic residues. ATP is bound at residue Gly-772–Thr-779. A DEAG box motif is present at residues Asp-888–Gly-891.

This sequence belongs to the DNA2/NAM7 helicase family. SDE3 subfamily. In terms of assembly, interacts with PIWIL1. Interacts with PIWIL2. Interacts with PIWIL4. Interacts with HSPA2. Interacts with PLD6. Isoform 1: Specifically expressed in testis. Isoform 1: In testis, present in pachytene spermatocytes but absent in postmeiotic spermatids (at protein level). Isoform 2: Present in cardiomyocytes (at protein level). Isoform 2: Heart specific. Isoform 3: Heart specific and is specifically expressed in cardiac myocytes.

The protein localises to the cytoplasm. It carries out the reaction ATP + H2O = ADP + phosphate + H(+). In terms of biological role, ATP-dependent RNA helicase required during spermatogenesis to repress transposable elements and prevent their mobilization, which is essential for germline integrity. Acts via the piRNA metabolic process, which mediates the repression of transposable elements during meiosis by forming complexes composed of piRNAs and Piwi proteins and governs the methylation and subsequent repression of transposons. Involved in the primary piRNA metabolic process. Specifically binds to piRNA precursors and promotes the generation of intermediate piRNA processing fragments that are subsequently loaded to Piwi proteins. Acts via its ATP-dependent RNA helicase activity: displays 5'-3' RNA unwinding activity and probably mediates unwinding and funneling of single-stranded piRNA precursor transcripts to the endonuclease that catalyzes the first cleavage step of piRNA processing to generate piRNA intermediate fragments that are subsequently loaded to Piwi proteins. Its function is as follows. May act downstream of MEF2C during heart formation. Acts as a cardiac-specific suppressor of cardiomyocyte hypertrophy and cell cycle progression, suggesting that it may suppress these processes through the regulation of CDKN1A. Such results however require additional evidence. The polypeptide is RNA helicase Mov10l1 (Mus musculus (Mouse)).